The chain runs to 1300 residues: CRISPR-associated endonuclease Cas12a (1300 aa).

Residues 1 to 24 (MSIYQEFVNKYSLSKTLRFELIPQ) form a wedge region 1 region. Recognition domain regions lie at residues 25–339 (GKTL…SFVI) and 340–591 (DKLE…QKPY). 2 binds crRNA alone and in crRNA-target DNA heteroduplex regions span residues 47 to 51 (YKKAK) and 182 to 186 (FHENR). Positions 301-305 (NEYIN) are binds DNA in crRNA-target DNA heteroduplex. Binds crRNA in crRNA-target DNA heteroduplex stretches follow at residues 326-329 (KQIL) and 538-541 (HKLK). Residues 591 to 595 (YSDEK) are binds crRNA. The tract at residues 592 to 662 (SDEKFKLNFE…GYKKIVYKLL (71 aa)) is wedge region 2. The LKL, important for PAM recognition and DNA unwinding stretch occupies residues 662–679 (LPGANKMLPKVFFSAKSI). The interval 663 to 762 (PGANKMLPKV…FYREVENQGY (100 aa)) is PAM-interacting domain (PI). The segment at 671 to 677 (KVFFSAK) is binds DNA protospacer adjacent motif (PAM) on target DNA. The binds single-strand non-target DNA stretch occupies residues 692-704 (RNHSTHTKNGSPQ). The wedge region 3 stretch occupies residues 763 to 892 (KLTFENISES…PITINFKSSG (130 aa)). 2 binds crRNA regions span residues 791-794 (KDFS) and 803-804 (LH). Residues histidine 843, lysine 852, and lysine 869 each act as for pre-crRNA processing in the active site. Binds crRNA regions lie at residues 851–853 (NKN) and 865–873 (YDLIKDKRF). The interval 893–953 (ANKFNDEINL…IGNDRMKTNY (61 aa)) is ruvC-I. The active-site For DNase activity of RuvC domain is aspartate 917. The bridge helix stretch occupies residues 954 to 971 (HDKLAAIEKDRDSARKDW). The tract at residues 972-1078 (KKINNIKEMK…KQTGIIYYVP (107 aa)) is ruvC-II. Catalysis depends on glutamate 1006, which acts as the For DNase activity of RuvC domain. Residues 1079–1254 (AGFTSKICPV…QAPKNMPQDA (176 aa)) are nuclease domain. Residue aspartate 1255 is the For DNase activity of RuvC domain of the active site. The interval 1255-1300 (DANGAYHIGLKGLMLLGRIKNNQEGKKLNLVIKNEEYFEFVQNRNN) is ruvC-III.

It belongs to the CRISPR-associated endonuclease Cas12a family. Might be a homodimer. Might be a monomer. The cofactor is Ca(2+). Mg(2+) is required as a cofactor.

It catalyses the reaction Endonucleolytic cleavage to 5'-phosphodinucleotide and 5'-phosphooligonucleotide end-products.. The enzyme catalyses RNA = a 5'-hydroxy-ribonucleotide + n nucleoside-2',3'-cyclophosphates.. CRISPR (clustered regularly interspaced short palindromic repeat), is an adaptive immune system that provides protection against mobile genetic elements (viruses, transposable elements and conjugative plasmids). CRISPR clusters contain sequences complementary to antecedent mobile elements and target invading nucleic acids. CRISPR clusters are transcribed and processed into CRISPR RNA (crRNA). Has endonuclease activity on pre-crRNA and dsDNA, using different active sites. A single-RNA guided endonuclease that is also capable of guiding crRNA processing; correct processing of pre-crRNA requires only this protein and the CRISPR locus. pre-crRNA processing proceeds by an intramolecular nucleophilic attack on the scissile phosphate by the 2'-OH of the upstream ribonucleotide, the divalent cation (which is bound by the crRNA) is probably required for ordering the crRNA pseudoknot and/or increasing RNA binding. RNA mutagenesis studies show pre-crRNA cleavage is highly sequence- and structure-specific. Forms a complex with crRNA and complementary dsDNA, where the crRNA displaces the non-target DNA strand and directs endonucleolytic cleavage of both strands of the DNA. Cleavage results in staggered 5-base 5' overhangs 14-18 and 21-23 bases downstream of the PAM (protospacer adjacent motif) on the non-target and target strands respectively. Both target and non-target strand DNA are probably independently cleaved in the same active site. When this protein is expressed in E.coli it prevents plasmids homologous to the first CRISPR spacer from transforming, formally showing it is responsible for plasmid immunity. The protein is CRISPR-associated endonuclease Cas12a of Francisella tularensis subsp. novicida (strain U112).